The primary structure comprises 97 residues: Class II hydrophobin NC2 (97 aa).

Residues 1–17 (MQFTIATVLSLLTITLA) form the signal peptide. Intrachain disulfides connect Cys31–Cys79, Cys40–Cys70, Cys41–Cys53, and Cys80–Cys91. An N-linked (GlcNAc...) asparagine glycan is attached at Asn62.

The protein belongs to the cerato-ulmin hydrophobin family. In terms of assembly, homotrimer. Further self-assembles to form highly ordered films at water-air interfaces through intermolecular interactions.

It localises to the secreted. The protein localises to the cell wall. Functionally, aerial growth, conidiation, and dispersal of filamentous fungi in the environment rely upon a capability of their secreting small amphipathic proteins called hydrophobins (HPBs) with low sequence identity. Class I can self-assemble into an outermost layer of rodlet bundles on aerial cell surfaces, conferring cellular hydrophobicity that supports fungal growth, development and dispersal; whereas Class II form highly ordered films at water-air interfaces through intermolecular interactions but contribute nothing to the rodlet structure. NC2 is a class II hydrophobin that has the potential to adsorb to the hydrophobic interface at the hydrophobic-hydrophilic interface at very high rate but the predicted self-assembly NC2 film possesses a lower flexural rigidity than other class II hydrophobins such as HFBII from Hypocrea jecorina (also known as Trichoderma reesei). The sequence is that of Class II hydrophobin NC2 from Neurospora crassa (strain ATCC 24698 / 74-OR23-1A / CBS 708.71 / DSM 1257 / FGSC 987).